The chain runs to 174 residues: uncharacterized protein (174 aa).

Residues 153 to 174 form a disordered region; it reads RSGNHSAGNVHPASPMIKVQGG.

This is an uncharacterized protein from Sinorhizobium fredii (strain NBRC 101917 / NGR234).